The chain runs to 208 residues: UPF0637 protein BCAH820_3975 (208 aa).

This sequence belongs to the UPF0637 family.

In Bacillus cereus (strain AH820), this protein is UPF0637 protein BCAH820_3975.